A 286-amino-acid polypeptide reads, in one-letter code: 4-diphosphocytidyl-2-C-methyl-D-erythritol kinase (286 aa).

Residue Lys-13 is part of the active site. 101-111 provides a ligand contact to ATP; it reads PQGAGLGGGSS. Residue Asp-143 is part of the active site.

Belongs to the GHMP kinase family. IspE subfamily.

It carries out the reaction 4-CDP-2-C-methyl-D-erythritol + ATP = 4-CDP-2-C-methyl-D-erythritol 2-phosphate + ADP + H(+). It functions in the pathway isoprenoid biosynthesis; isopentenyl diphosphate biosynthesis via DXP pathway; isopentenyl diphosphate from 1-deoxy-D-xylulose 5-phosphate: step 3/6. Catalyzes the phosphorylation of the position 2 hydroxy group of 4-diphosphocytidyl-2C-methyl-D-erythritol. This Idiomarina loihiensis (strain ATCC BAA-735 / DSM 15497 / L2-TR) protein is 4-diphosphocytidyl-2-C-methyl-D-erythritol kinase.